The primary structure comprises 86 residues: Large ribosomal subunit protein bL27 (86 aa).

Gly residues predominate over residues 1–10 (MAQKKGGGST). The segment at 1–22 (MAQKKGGGSTRNGRDSESKRLG) is disordered.

Belongs to the bacterial ribosomal protein bL27 family.

The chain is Large ribosomal subunit protein bL27 from Polynucleobacter asymbioticus (strain DSM 18221 / CIP 109841 / QLW-P1DMWA-1) (Polynucleobacter necessarius subsp. asymbioticus).